The following is a 150-amino-acid chain: D-aminoacyl-tRNA deacylase (150 aa).

Positions 138–139 match the Gly-cisPro motif, important for rejection of L-amino acids motif; that stretch reads GP.

It belongs to the DTD family. In terms of assembly, homodimer.

Its subcellular location is the cytoplasm. The enzyme catalyses glycyl-tRNA(Ala) + H2O = tRNA(Ala) + glycine + H(+). It catalyses the reaction a D-aminoacyl-tRNA + H2O = a tRNA + a D-alpha-amino acid + H(+). In terms of biological role, an aminoacyl-tRNA editing enzyme that deacylates mischarged D-aminoacyl-tRNAs. Also deacylates mischarged glycyl-tRNA(Ala), protecting cells against glycine mischarging by AlaRS. Acts via tRNA-based rather than protein-based catalysis; rejects L-amino acids rather than detecting D-amino acids in the active site. By recycling D-aminoacyl-tRNA to D-amino acids and free tRNA molecules, this enzyme counteracts the toxicity associated with the formation of D-aminoacyl-tRNA entities in vivo and helps enforce protein L-homochirality. In Natranaerobius thermophilus (strain ATCC BAA-1301 / DSM 18059 / JW/NM-WN-LF), this protein is D-aminoacyl-tRNA deacylase.